A 242-amino-acid polypeptide reads, in one-letter code: MEFDPTKINTSSIDHVTILQYIDEPNDIRLTVCIIRNINNITYYINITKINPHLANQFRAWKKRIAGRDYMTNLSRDTGIQQSKLTETIRNCQKNRNIYGLYIHYNLVINVVIDWITDVIVQSILRGLVNWYIANNTYTPNTPNNTTTISELDIIKILDKYEDVYRVSKEKECGICYEVVYSKRLENDRYFGLLDSCNHIFCITCINIWHRTRRETGASDNCPICRTRFRNITMSKFYKLVN.

Residues 21–131 form the KilA-N domain; that stretch reads YIDEPNDIRL…QSILRGLVNW (111 aa). The RING-type zinc-finger motif lies at 173 to 226; the sequence is CGICYEVVYSKRLENDRYFGLLDSCNHIFCITCINIWHRTRRETGASDNCPICR.

Belongs to the orthopoxvirus OPG021 family.

The protein localises to the host cytoplasm. The enzyme catalyses S-ubiquitinyl-[E2 ubiquitin-conjugating enzyme]-L-cysteine + [acceptor protein]-L-lysine = [E2 ubiquitin-conjugating enzyme]-L-cysteine + N(6)-ubiquitinyl-[acceptor protein]-L-lysine.. Functionally, RING-finger E3 ubiquitin ligase which catalyzes the formation of both 'Lys-48'- and 'Lys-63'-linked polyubiquitin chains. Plays an important role in virulence by acting as an anti-apoptotic factor. In Bos taurus (Bovine), this protein is Host range factor p28 (OPG021).